The primary structure comprises 132 residues: MDVNVSYKDTYSVITYQVWEPIDGGKNITLIIEYDADIVDNGILFKTVSIPIGGDLNIKNFHINFVSPYYLTYQEPDGNNFQIPKKTLLIINAEFSILPLPKLPVHGYVVFWLSILCILIIIFVYTELRRKK.

Residues 105 to 125 (VHGYVVFWLSILCILIIIFVY) traverse the membrane as a helical segment.

It is found in the membrane. This is an uncharacterized protein from Methanocaldococcus jannaschii (strain ATCC 43067 / DSM 2661 / JAL-1 / JCM 10045 / NBRC 100440) (Methanococcus jannaschii).